The primary structure comprises 701 residues: Elongation factor G (701 aa).

The tr-type G domain maps to 8–290; it reads ARYRNIGISA…AVIEYLPAPT (283 aa). Residues 17 to 24, 88 to 92, and 142 to 145 each bind GTP; these read AHIDAGKT, DTPGH, and NKMD.

The protein belongs to the TRAFAC class translation factor GTPase superfamily. Classic translation factor GTPase family. EF-G/EF-2 subfamily.

Its subcellular location is the cytoplasm. In terms of biological role, catalyzes the GTP-dependent ribosomal translocation step during translation elongation. During this step, the ribosome changes from the pre-translocational (PRE) to the post-translocational (POST) state as the newly formed A-site-bound peptidyl-tRNA and P-site-bound deacylated tRNA move to the P and E sites, respectively. Catalyzes the coordinated movement of the two tRNA molecules, the mRNA and conformational changes in the ribosome. The protein is Elongation factor G of Sodalis glossinidius (strain morsitans).